We begin with the raw amino-acid sequence, 511 residues long: Maturase K (511 aa).

The protein belongs to the intron maturase 2 family. MatK subfamily.

Its subcellular location is the plastid. It localises to the chloroplast. Its function is as follows. Usually encoded in the trnK tRNA gene intron. Probably assists in splicing its own and other chloroplast group II introns. The polypeptide is Maturase K (Brachypodium sylvaticum (False brome)).